The following is a 239-amino-acid chain: Serine protease SplF (239 aa).

The signal sequence occupies residues methionine 1–alanine 36. Active-site charge relay system residues include histidine 75, aspartate 114, and serine 192.

It belongs to the peptidase S1B family.

It localises to the secreted. The sequence is that of Serine protease SplF (splF) from Staphylococcus aureus (strain NCTC 8325 / PS 47).